A 295-amino-acid chain; its full sequence is Protoheme IX farnesyltransferase (295 aa).

The next 9 helical transmembrane spans lie at 30 to 50, 51 to 71, 93 to 115, 119 to 136, 148 to 168, 175 to 195, 219 to 239, 244 to 264, and 275 to 295; these read LVVL…HPLI, AVIS…INMW, ISRS…IMMI, YISG…IYVY, IVIG…SVTG, LVLF…LSLL, IHIL…GLFL, LYEI…FQVF, and MFTY…LSSF.

It belongs to the UbiA prenyltransferase family. Protoheme IX farnesyltransferase subfamily.

The protein resides in the cell inner membrane. It catalyses the reaction heme b + (2E,6E)-farnesyl diphosphate + H2O = Fe(II)-heme o + diphosphate. Its pathway is porphyrin-containing compound metabolism; heme O biosynthesis; heme O from protoheme: step 1/1. In terms of biological role, converts heme B (protoheme IX) to heme O by substitution of the vinyl group on carbon 2 of heme B porphyrin ring with a hydroxyethyl farnesyl side group. This Ehrlichia ruminantium (strain Welgevonden) protein is Protoheme IX farnesyltransferase.